The sequence spans 364 residues: tRNA 2-selenouridine synthase (364 aa).

The region spanning 14–137 is the Rhodanese domain; sequence LLADTPLIDV…LRQTAIQATW (124 aa). C97 serves as the catalytic S-selanylcysteine intermediate.

This sequence belongs to the SelU family. In terms of assembly, monomer.

It carries out the reaction 5-methylaminomethyl-2-thiouridine(34) in tRNA + selenophosphate + (2E)-geranyl diphosphate + H2O + H(+) = 5-methylaminomethyl-2-selenouridine(34) in tRNA + (2E)-thiogeraniol + phosphate + diphosphate. The catalysed reaction is 5-methylaminomethyl-2-thiouridine(34) in tRNA + (2E)-geranyl diphosphate = 5-methylaminomethyl-S-(2E)-geranyl-thiouridine(34) in tRNA + diphosphate. It catalyses the reaction 5-methylaminomethyl-S-(2E)-geranyl-thiouridine(34) in tRNA + selenophosphate + H(+) = 5-methylaminomethyl-2-(Se-phospho)selenouridine(34) in tRNA + (2E)-thiogeraniol. The enzyme catalyses 5-methylaminomethyl-2-(Se-phospho)selenouridine(34) in tRNA + H2O = 5-methylaminomethyl-2-selenouridine(34) in tRNA + phosphate. Functionally, involved in the post-transcriptional modification of the uridine at the wobble position (U34) of tRNA(Lys), tRNA(Glu) and tRNA(Gln). Catalyzes the conversion of 2-thiouridine (S2U-RNA) to 2-selenouridine (Se2U-RNA). Acts in a two-step process involving geranylation of 2-thiouridine (S2U) to S-geranyl-2-thiouridine (geS2U) and subsequent selenation of the latter derivative to 2-selenouridine (Se2U) in the tRNA chain. This is tRNA 2-selenouridine synthase from Salmonella enteritidis PT4 (strain P125109).